Here is a 297-residue protein sequence, read N- to C-terminus: tRNA-cytidine(32) 2-sulfurtransferase (297 aa).

The short motif at 45 to 50 is the PP-loop motif element; the sequence is SGGKDS. [4Fe-4S] cluster-binding residues include cysteine 120, cysteine 123, and cysteine 211.

This sequence belongs to the TtcA family. Homodimer. Mg(2+) serves as cofactor. The cofactor is [4Fe-4S] cluster.

The protein localises to the cytoplasm. The enzyme catalyses cytidine(32) in tRNA + S-sulfanyl-L-cysteinyl-[cysteine desulfurase] + AH2 + ATP = 2-thiocytidine(32) in tRNA + L-cysteinyl-[cysteine desulfurase] + A + AMP + diphosphate + H(+). The protein operates within tRNA modification. Its function is as follows. Catalyzes the ATP-dependent 2-thiolation of cytidine in position 32 of tRNA, to form 2-thiocytidine (s(2)C32). The sulfur atoms are provided by the cysteine/cysteine desulfurase (IscS) system. This is tRNA-cytidine(32) 2-sulfurtransferase from Vibrio parahaemolyticus serotype O3:K6 (strain RIMD 2210633).